A 232-amino-acid polypeptide reads, in one-letter code: Small ribosomal subunit protein uS3 (232 aa).

The KH type-2 domain occupies 39–107; sequence VRQFLTKELA…PAQINIAEVR (69 aa).

It belongs to the universal ribosomal protein uS3 family. As to quaternary structure, part of the 30S ribosomal subunit. Forms a tight complex with proteins S10 and S14.

Its function is as follows. Binds the lower part of the 30S subunit head. Binds mRNA in the 70S ribosome, positioning it for translation. This Yersinia pestis bv. Antiqua (strain Antiqua) protein is Small ribosomal subunit protein uS3.